The primary structure comprises 503 residues: UDP-N-acetylmuramate--L-alanine ligase (503 aa).

Residues 1-22 (MIKQTHVSNSSNNSTNSTAAQV) form a disordered region. Positions 8–18 (SNSSNNSTNST) are enriched in low complexity. 135 to 141 (GTHGKTT) is a binding site for ATP.

It belongs to the MurCDEF family.

The protein localises to the cytoplasm. It catalyses the reaction UDP-N-acetyl-alpha-D-muramate + L-alanine + ATP = UDP-N-acetyl-alpha-D-muramoyl-L-alanine + ADP + phosphate + H(+). It functions in the pathway cell wall biogenesis; peptidoglycan biosynthesis. Functionally, cell wall formation. This Colwellia psychrerythraea (strain 34H / ATCC BAA-681) (Vibrio psychroerythus) protein is UDP-N-acetylmuramate--L-alanine ligase.